Here is a 914-residue protein sequence, read N- to C-terminus: Isoleucine--tRNA ligase (914 aa).

The 'HIGH' region signature appears at 64 to 74 (PYANGNFHLGH). An L-isoleucyl-5'-AMP-binding site is contributed by Glu-557. The 'KMSKS' region motif lies at 598–602 (PMSKS). Lys-601 is an ATP binding site. Zn(2+) is bound by residues Cys-889, Cys-892, Cys-906, and Cys-909.

It belongs to the class-I aminoacyl-tRNA synthetase family. IleS type 1 subfamily. Monomer. Requires Zn(2+) as cofactor.

It is found in the cytoplasm. It catalyses the reaction tRNA(Ile) + L-isoleucine + ATP = L-isoleucyl-tRNA(Ile) + AMP + diphosphate. Functionally, catalyzes the attachment of isoleucine to tRNA(Ile). As IleRS can inadvertently accommodate and process structurally similar amino acids such as valine, to avoid such errors it has two additional distinct tRNA(Ile)-dependent editing activities. One activity is designated as 'pretransfer' editing and involves the hydrolysis of activated Val-AMP. The other activity is designated 'posttransfer' editing and involves deacylation of mischarged Val-tRNA(Ile). The polypeptide is Isoleucine--tRNA ligase (Leptospira interrogans serogroup Icterohaemorrhagiae serovar copenhageni (strain Fiocruz L1-130)).